Reading from the N-terminus, the 274-residue chain is Transcriptional activator PerA (274 aa).

An HTH araC/xylS-type domain is found at 168–265 (DRVIKVIELD…NTTPKKYNGV (98 aa)). 2 DNA-binding regions (H-T-H motif) span residues 185 to 206 (GDVS…NKEN) and 232 to 255 (IDEI…KEYY).

Functionally, could help in the transcriptional activator of eaeA expression in enteropathogenic E.coli. However, it seems that it is PerC which acts as an activator. In Escherichia coli O127:H6 (strain E2348/69 / EPEC), this protein is Transcriptional activator PerA (perA).